We begin with the raw amino-acid sequence, 661 residues long: Ubiquitin carboxyl-terminal hydrolase 51 (661 aa).

The tract at residues 1 to 144 (MRGTQGAQEM…SENSLLEVGS (144 aa)) is disordered. Residues 21-30 (TSENLTSRGS) show a composition bias toward polar residues. The segment covering 53-71 (PRRKPRPRPQPRSRSRGGR) has biased composition (basic residues). Residues 75-96 (APPPPPAKPPPPPPAPPPPPLP) show a composition bias toward pro residues. Residues 149–267 (TGCCHVESFK…KETKEKILGL (119 aa)) form a UBP-type zinc finger. Residues Cys151, His153, Cys192, Cys195, Cys205, Cys208, Cys213, His218, His222, His228, Cys241, and Cys244 each coordinate Zn(2+). Residues 320–656 (RGLINLGNTC…EGYLLFYHRQ (337 aa)) enclose the USP domain. Cys329 serves as the catalytic Nucleophile. Residue His615 is the Proton acceptor of the active site.

It belongs to the peptidase C19 family. Interacts with H2A.

It localises to the chromosome. The catalysed reaction is Thiol-dependent hydrolysis of ester, thioester, amide, peptide and isopeptide bonds formed by the C-terminal Gly of ubiquitin (a 76-residue protein attached to proteins as an intracellular targeting signal).. Specifically deubiquitinates 'Lys-14' (H2AK13Ub) and 'Lys-16'(H2AK15Ub) of histone H2A regulating the DNA damage response at double-strand breaks (DSBs). USP51 is recruited to chromatin after DNA damage and regulates the dynamic assembly/disassembly of TP53BP1 and BRCA1. Functions in DNA double-strand break repair also by mediating the deubiquitination and subsequent stabilization of DGCR8, leading to the recruitment of DGCR8 binding partners to double strand breaks such as RNF168 or MDC1. In addition, promotes the deubiquitination and stabilization of the transcriptional repressor ZEB1. This is Ubiquitin carboxyl-terminal hydrolase 51 from Mus musculus (Mouse).